The primary structure comprises 321 residues: Aspartate carbamoyltransferase catalytic subunit (321 aa).

Residues arginine 57 and threonine 58 each contribute to the carbamoyl phosphate site. L-aspartate is bound at residue lysine 85. 3 residues coordinate carbamoyl phosphate: arginine 107, histidine 142, and glutamine 145. Residues arginine 175 and arginine 229 each contribute to the L-aspartate site. Positions 270 and 271 each coordinate carbamoyl phosphate.

The protein belongs to the aspartate/ornithine carbamoyltransferase superfamily. ATCase family. As to quaternary structure, heterododecamer (2C3:3R2) of six catalytic PyrB chains organized as two trimers (C3), and six regulatory PyrI chains organized as three dimers (R2).

The catalysed reaction is carbamoyl phosphate + L-aspartate = N-carbamoyl-L-aspartate + phosphate + H(+). Its pathway is pyrimidine metabolism; UMP biosynthesis via de novo pathway; (S)-dihydroorotate from bicarbonate: step 2/3. In terms of biological role, catalyzes the condensation of carbamoyl phosphate and aspartate to form carbamoyl aspartate and inorganic phosphate, the committed step in the de novo pyrimidine nucleotide biosynthesis pathway. This is Aspartate carbamoyltransferase catalytic subunit from Mycobacterium leprae (strain TN).